The sequence spans 281 residues: MATVTAALVKELRERTGAGMMECKKALVEANADIELAIENMRKSGAAKAAKKAGNVAAEGAIIIKEENGVAVLLEVNCQTDFVAKDGNFTAFADKVALDALATKATAEELVAKFEEERVALVAKIGENINIRRVAYVEGTAIASYRHGEKIGVVVAGEGDAETLKHVAMHVAASKPEFVNPEDVPADVVAKEKEVQVEIAMNEGKPQEIAEKMVIGRMKKFTGEISLTGQAFIMEPKKSVGEMLKEKGASVATFVRLEVGEGIEKAAEMSFAEEVALAQKG.

Positions 80-83 are involved in Mg(2+) ion dislocation from EF-Tu; sequence TDFV.

This sequence belongs to the EF-Ts family.

It is found in the cytoplasm. Functionally, associates with the EF-Tu.GDP complex and induces the exchange of GDP to GTP. It remains bound to the aminoacyl-tRNA.EF-Tu.GTP complex up to the GTP hydrolysis stage on the ribosome. This Vibrio campbellii (strain ATCC BAA-1116) protein is Elongation factor Ts.